The sequence spans 262 residues: Small ribosomal subunit protein uS2 (262 aa).

A disordered region spans residues 223–262 (KSLLEQDGGEQAAGEEVSQDEKDAVVAEAMSEEDFGEDEE). Residues 227–238 (EQDGGEQAAGEE) are compositionally biased toward low complexity. Over residues 252-262 (MSEEDFGEDEE) the composition is skewed to acidic residues.

Belongs to the universal ribosomal protein uS2 family.

The chain is Small ribosomal subunit protein uS2 from Campylobacter concisus (strain 13826).